The following is a 413-amino-acid chain: Multifunctional CCA protein (413 aa).

Glycine 8 and arginine 11 together coordinate ATP. The CTP site is built by glycine 8 and arginine 11. Aspartate 21 and aspartate 23 together coordinate Mg(2+). Arginine 91, arginine 137, and arginine 140 together coordinate ATP. Positions 91, 137, and 140 each coordinate CTP. Positions 228 to 329 (TGIHTLMVLA…IKIFDKADLW (102 aa)) constitute an HD domain.

This sequence belongs to the tRNA nucleotidyltransferase/poly(A) polymerase family. Bacterial CCA-adding enzyme type 1 subfamily. Monomer. Can also form homodimers and oligomers. Mg(2+) is required as a cofactor. Requires Ni(2+) as cofactor.

It catalyses the reaction a tRNA precursor + 2 CTP + ATP = a tRNA with a 3' CCA end + 3 diphosphate. The catalysed reaction is a tRNA with a 3' CCA end + 2 CTP + ATP = a tRNA with a 3' CCACCA end + 3 diphosphate. Catalyzes the addition and repair of the essential 3'-terminal CCA sequence in tRNAs without using a nucleic acid template. Adds these three nucleotides in the order of C, C, and A to the tRNA nucleotide-73, using CTP and ATP as substrates and producing inorganic pyrophosphate. tRNA 3'-terminal CCA addition is required both for tRNA processing and repair. Also involved in tRNA surveillance by mediating tandem CCA addition to generate a CCACCA at the 3' terminus of unstable tRNAs. While stable tRNAs receive only 3'-terminal CCA, unstable tRNAs are marked with CCACCA and rapidly degraded. In Shewanella woodyi (strain ATCC 51908 / MS32), this protein is Multifunctional CCA protein.